The following is an 834-amino-acid chain: Protein translocase subunit SecA (834 aa).

Residues glutamine 85, glycine 103–threonine 107, and aspartate 491 each bind ATP. A disordered region spans residues arginine 790–arginine 809. The Zn(2+) site is built by cysteine 820, cysteine 822, cysteine 831, and cysteine 832.

This sequence belongs to the SecA family. In terms of assembly, monomer and homodimer. Part of the essential Sec protein translocation apparatus which comprises SecA, SecYEG and auxiliary proteins SecDF. Other proteins may also be involved. Requires Zn(2+) as cofactor.

It localises to the cell membrane. The protein localises to the cytoplasm. The catalysed reaction is ATP + H2O + cellular proteinSide 1 = ADP + phosphate + cellular proteinSide 2.. Functionally, part of the Sec protein translocase complex. Interacts with the SecYEG preprotein conducting channel. Has a central role in coupling the hydrolysis of ATP to the transfer of proteins into and across the cell membrane, serving as an ATP-driven molecular motor driving the stepwise translocation of polypeptide chains across the membrane. The protein is Protein translocase subunit SecA of Clostridium novyi (strain NT).